The following is a 906-amino-acid chain: NACHT, LRR and PYD domains-containing protein 1b allele 4 (906 aa).

The disordered stretch occupies residues 1-22; it reads MEESPPKQKSNTKVAQHEGQQD. The 310-residue stretch at 126–435 folds into the NACHT domain; it reads QLVIIEGAAG…EFFAAISCIL (310 aa). Residue 132 to 139 coordinates ATP; that stretch reads GAAGIGKS. 2 LRR repeats span residues 627–647 and 684–704; these read NLEGLDLSGNSLRYSVVQSLC and SLTELYLQLNDLGDDGVRMLC. The FIIND (incomplete) domain occupies 789–906; sequence FWGPTGPVAT…FQEHGSRNAR (118 aa).

This sequence belongs to the NLRP family. Expressed in macrophages.

It localises to the cytoplasm. Its subcellular location is the cytosol. Its function is as follows. Probable inactive allele of Nlrp1b, which lacks a CARD domain, suggesting that it is not able to form an inflammasome. Contrary to Nlrp1b allele 1, allele 4 is not activated by B.anthracis lethal toxin and no other activation signal is reported. This chain is NACHT, LRR and PYD domains-containing protein 1b allele 4, found in Mus musculus (Mouse).